The primary structure comprises 101 residues: uncharacterized protein (101 aa).

This is an uncharacterized protein from Sulfolobus islandicus filamentous virus (isolate Iceland/Hveragerdi) (SIFV).